The following is a 71-amino-acid chain: MNDLKLLRSKLSTETIEELYKKLNLLKKELFNLRFQQALGELKNTSRFSLVKKSIARIKTELTKRSNSEEY.

Belongs to the universal ribosomal protein uL29 family.

This is Large ribosomal subunit protein uL29 from Rickettsia canadensis (strain McKiel).